A 153-amino-acid chain; its full sequence is Zinc finger protein GIS2 (153 aa).

CCHC-type zinc fingers lie at residues 4-21 (KACYVCGKIGHLAEDCDS), 23-40 (RLCYNCNKPGHVQTDCTM), 47-64 (KQCYNCGETGHVRSECTV), 65-82 (QRCFNCNQTGHISRECPE), 92-109 (VSCYKCGGPNHMAKDCMK), 116-133 (LKCYTCGQAGHMSRDCQN), and 135-152 (RLCYNCNETGHISKDCPK).

The protein resides in the cytoplasm. Functionally, may act in the sexual differentiation pathway. The protein is Zinc finger protein GIS2 (GIS2) of Saccharomyces cerevisiae (strain ATCC 204508 / S288c) (Baker's yeast).